The following is a 331-amino-acid chain: Glutaminase-asparaginase (331 aa).

In terms of domain architecture, Asparaginase/glutaminase spans 2–331; sequence NNVVIVATGG…KEIQNMFWNY (330 aa). Thr12 serves as the catalytic Acyl-ester intermediate. Substrate contacts are provided by residues Ser59 and 92–93; that span reads TD.

This sequence belongs to the asparaginase 1 family. In terms of assembly, homotetramer.

The protein resides in the periplasm. It catalyses the reaction L-glutamine + H2O = L-glutamate + NH4(+). The enzyme catalyses L-asparagine + H2O = L-aspartate + NH4(+). The polypeptide is Glutaminase-asparaginase (ansB) (Acinetobacter glutaminasificans).